Here is a 396-residue protein sequence, read N- to C-terminus: Elongation factor Tu (396 aa).

The 197-residue stretch at 10–206 (KPHVNIGTIG…AVDEYIPTPQ (197 aa)) folds into the tr-type G domain. The tract at residues 19–26 (GHVDHGKT) is G1. GTP is bound at residue 19–26 (GHVDHGKT). T26 contacts Mg(2+). Residues 60–64 (GITIS) form a G2 region. Residues 81–84 (DCPG) form a G3 region. Residues 81–85 (DCPGH) and 136–139 (NKVD) each bind GTP. The interval 136 to 139 (NKVD) is G4. The G5 stretch occupies residues 174–176 (SAL).

This sequence belongs to the TRAFAC class translation factor GTPase superfamily. Classic translation factor GTPase family. EF-Tu/EF-1A subfamily. Monomer.

The protein localises to the cytoplasm. The enzyme catalyses GTP + H2O = GDP + phosphate + H(+). In terms of biological role, GTP hydrolase that promotes the GTP-dependent binding of aminoacyl-tRNA to the A-site of ribosomes during protein biosynthesis. This Stigmatella aurantiaca protein is Elongation factor Tu.